Here is a 641-residue protein sequence, read N- to C-terminus: UvrABC system protein C (641 aa).

Positions 16 to 95 (ESPGVYRFWD…IKQYEPRFNI (80 aa)) constitute a GIY-YIG domain. Residues 208-243 (TEYLRRLEKDMRAAAAAEDFERAARLRDDAAALRLA) enclose the UVR domain.

It belongs to the UvrC family. In terms of assembly, interacts with UvrB in an incision complex.

It localises to the cytoplasm. Functionally, the UvrABC repair system catalyzes the recognition and processing of DNA lesions. UvrC both incises the 5' and 3' sides of the lesion. The N-terminal half is responsible for the 3' incision and the C-terminal half is responsible for the 5' incision. The polypeptide is UvrABC system protein C (Acidothermus cellulolyticus (strain ATCC 43068 / DSM 8971 / 11B)).